Here is a 273-residue protein sequence, read N- to C-terminus: MDQKFAVFGNPISHSKSPRIHTLFSEQTGIEHRYGKVLAPSEAFENTLVSFFADGAQGANITTPFKERAYDQCDELTDRASLAGAVNTIKRLEDGRLLGDNTDGIGLLSDLERQNLIRTTDHILLVGAGGAARGVILPLLSYGCTVVVTNRTHTRAQQLAKVFNHIGDIDVCEMSELAGQRFDLVINATASGLHGEVPNLPAAILTSQTRCYDMFYQAGTTPFLAWAQRLGLADYADGLGMLVGQAAHAFKLWHGVMPEITPVLAQLRSELGK.

Residues 15–17 (SKS) and Thr62 contribute to the shikimate site. The active-site Proton acceptor is Lys66. Asp78 is an NADP(+) binding site. Shikimate-binding residues include Asn87 and Asp103. Residues 127–131 (GAGGA), 150–155 (NRTHTR), Ala218, and Gly238 contribute to the NADP(+) site.

Belongs to the shikimate dehydrogenase family. Homodimer.

The catalysed reaction is shikimate + NADP(+) = 3-dehydroshikimate + NADPH + H(+). It functions in the pathway metabolic intermediate biosynthesis; chorismate biosynthesis; chorismate from D-erythrose 4-phosphate and phosphoenolpyruvate: step 4/7. In terms of biological role, involved in the biosynthesis of the chorismate, which leads to the biosynthesis of aromatic amino acids. Catalyzes the reversible NADPH linked reduction of 3-dehydroshikimate (DHSA) to yield shikimate (SA). This chain is Shikimate dehydrogenase (NADP(+)), found in Yersinia pseudotuberculosis serotype O:1b (strain IP 31758).